The following is a 52-amino-acid chain: uncharacterized protein (52 aa).

The chain crosses the membrane as a helical span at residues 21–40 (VAMNSYVELLFLSVPLIHIF).

It localises to the cell membrane. This is an uncharacterized protein from Bacillus subtilis (strain 168).